The primary structure comprises 146 residues: Hemoglobin subunit beta (146 aa).

Val-1 carries the post-translational modification N-acetylvaline. The Globin domain occupies 2–146; that stretch reads HLSGEEKGAV…VATALAHKYH (145 aa). Thr-12 is modified (phosphothreonine). The residue at position 44 (Ser-44) is a Phosphoserine. Lys-59 carries the post-translational modification N6-acetyllysine. His-63 contributes to the heme b binding site. At Lys-82 the chain carries N6-acetyllysine. Heme b is bound at residue His-92. Residue Cys-93 is modified to S-nitrosocysteine. An N6-acetyllysine modification is found at Lys-144.

Belongs to the globin family. As to quaternary structure, heterotetramer of two alpha chains and two beta chains. Red blood cells.

In terms of biological role, involved in oxygen transport from the lung to the various peripheral tissues. The chain is Hemoglobin subunit beta (HBB) from Tadarida brasiliensis (Brazilian free-tailed bat).